The chain runs to 460 residues: Bifunctional protein GlmU (460 aa).

Positions 1-229 (MTNYAIILAA…FNESLGVNDR (229 aa)) are pyrophosphorylase. UDP-N-acetyl-alpha-D-glucosamine-binding positions include 8 to 11 (LAAG), lysine 22, glutamine 72, and 77 to 78 (GT). Aspartate 102 contributes to the Mg(2+) binding site. Residues glycine 139, glutamate 154, asparagine 169, and asparagine 227 each contribute to the UDP-N-acetyl-alpha-D-glucosamine site. Asparagine 227 serves as a coordination point for Mg(2+). Residues 230 to 250 (VALATAETVMRQRITQKHMVN) are linker. The tract at residues 251-460 (GVTFQNPETV…RLAHHPSRSK (210 aa)) is N-acetyltransferase. 2 residues coordinate UDP-N-acetyl-alpha-D-glucosamine: arginine 332 and lysine 350. Histidine 362 (proton acceptor) is an active-site residue. Residues tyrosine 365 and asparagine 376 each coordinate UDP-N-acetyl-alpha-D-glucosamine. Acetyl-CoA is bound by residues alanine 379, 385 to 386 (NY), serine 404, alanine 422, and arginine 439.

This sequence in the N-terminal section; belongs to the N-acetylglucosamine-1-phosphate uridyltransferase family. In the C-terminal section; belongs to the transferase hexapeptide repeat family. As to quaternary structure, homotrimer. Requires Mg(2+) as cofactor.

It localises to the cytoplasm. It carries out the reaction alpha-D-glucosamine 1-phosphate + acetyl-CoA = N-acetyl-alpha-D-glucosamine 1-phosphate + CoA + H(+). It catalyses the reaction N-acetyl-alpha-D-glucosamine 1-phosphate + UTP + H(+) = UDP-N-acetyl-alpha-D-glucosamine + diphosphate. Its pathway is nucleotide-sugar biosynthesis; UDP-N-acetyl-alpha-D-glucosamine biosynthesis; N-acetyl-alpha-D-glucosamine 1-phosphate from alpha-D-glucosamine 6-phosphate (route II): step 2/2. It participates in nucleotide-sugar biosynthesis; UDP-N-acetyl-alpha-D-glucosamine biosynthesis; UDP-N-acetyl-alpha-D-glucosamine from N-acetyl-alpha-D-glucosamine 1-phosphate: step 1/1. The protein operates within bacterial outer membrane biogenesis; LPS lipid A biosynthesis. Its function is as follows. Catalyzes the last two sequential reactions in the de novo biosynthetic pathway for UDP-N-acetylglucosamine (UDP-GlcNAc). The C-terminal domain catalyzes the transfer of acetyl group from acetyl coenzyme A to glucosamine-1-phosphate (GlcN-1-P) to produce N-acetylglucosamine-1-phosphate (GlcNAc-1-P), which is converted into UDP-GlcNAc by the transfer of uridine 5-monophosphate (from uridine 5-triphosphate), a reaction catalyzed by the N-terminal domain. The protein is Bifunctional protein GlmU of Streptococcus pyogenes serotype M28 (strain MGAS6180).